Reading from the N-terminus, the 199-residue chain is MNETNDIDQLIYLFSKLPGLGSRSARRIVLYLLQDKDVRLKSLINNLINIDKKIVKCEICGNMDTENICRICSSEYRDKSVIAIVETVAELWAMERSGNFKGLYHVLGYNLSAASRKNPSMLRLPELLTRCFAANIKEVIIATNSTLEGQTTAYFITEYLKEHPAKISRLASGIPIGGELDYLDEGTLSAAINLRQPFE.

A C4-type zinc finger spans residues 57–72 (CEICGNMDTENICRIC). A Toprim domain is found at 80-175 (SVIAIVETVA…KISRLASGIP (96 aa)).

It belongs to the RecR family.

May play a role in DNA repair. It seems to be involved in an RecBC-independent recombinational process of DNA repair. It may act with RecF and RecO. This is Recombination protein RecR from Rickettsia canadensis (strain McKiel).